We begin with the raw amino-acid sequence, 176 residues long: Ribosome maturation factor RimM (176 aa).

The 80-residue stretch at Glu97–Phe176 folds into the PRC barrel domain.

Belongs to the RimM family. In terms of assembly, binds ribosomal protein uS19.

It localises to the cytoplasm. Its function is as follows. An accessory protein needed during the final step in the assembly of 30S ribosomal subunit, possibly for assembly of the head region. Essential for efficient processing of 16S rRNA. May be needed both before and after RbfA during the maturation of 16S rRNA. It has affinity for free ribosomal 30S subunits but not for 70S ribosomes. The sequence is that of Ribosome maturation factor RimM from Shewanella loihica (strain ATCC BAA-1088 / PV-4).